Consider the following 498-residue polypeptide: Protein flp (498 aa).

4 consecutive transmembrane segments (helical) span residues 6–26, 389–409, 433–453, and 471–491; these read LYFL…IHIT, FNIV…FSAY, LTLC…YLIL, and LALI…LLFL.

The protein resides in the cell membrane. Functionally, its precise function is unknown. Has no penicillin-binding activity and is not involved in methicillin resistance. This chain is Protein flp (flp), found in Staphylococcus aureus (strain MW2).